A 279-amino-acid polypeptide reads, in one-letter code: 4-hydroxy-3-methylbut-2-enyl diphosphate reductase (279 aa).

C12 lines the [4Fe-4S] cluster pocket. (2E)-4-hydroxy-3-methylbut-2-enyl diphosphate contacts are provided by H36 and H70. The dimethylallyl diphosphate site is built by H36 and H70. Residues H36 and H70 each contribute to the isopentenyl diphosphate site. C92 lines the [4Fe-4S] cluster pocket. Residue H120 coordinates (2E)-4-hydroxy-3-methylbut-2-enyl diphosphate. Residue H120 coordinates dimethylallyl diphosphate. Residue H120 participates in isopentenyl diphosphate binding. E122 functions as the Proton donor in the catalytic mechanism. T158 is a (2E)-4-hydroxy-3-methylbut-2-enyl diphosphate binding site. C186 provides a ligand contact to [4Fe-4S] cluster. The (2E)-4-hydroxy-3-methylbut-2-enyl diphosphate site is built by S214, S215, N216, and S258. Dimethylallyl diphosphate-binding residues include S214, S215, N216, and S258. Residues S214, S215, N216, and S258 each coordinate isopentenyl diphosphate.

It belongs to the IspH family. It depends on [4Fe-4S] cluster as a cofactor.

The enzyme catalyses isopentenyl diphosphate + 2 oxidized [2Fe-2S]-[ferredoxin] + H2O = (2E)-4-hydroxy-3-methylbut-2-enyl diphosphate + 2 reduced [2Fe-2S]-[ferredoxin] + 2 H(+). The catalysed reaction is dimethylallyl diphosphate + 2 oxidized [2Fe-2S]-[ferredoxin] + H2O = (2E)-4-hydroxy-3-methylbut-2-enyl diphosphate + 2 reduced [2Fe-2S]-[ferredoxin] + 2 H(+). Its pathway is isoprenoid biosynthesis; dimethylallyl diphosphate biosynthesis; dimethylallyl diphosphate from (2E)-4-hydroxy-3-methylbutenyl diphosphate: step 1/1. It functions in the pathway isoprenoid biosynthesis; isopentenyl diphosphate biosynthesis via DXP pathway; isopentenyl diphosphate from 1-deoxy-D-xylulose 5-phosphate: step 6/6. In terms of biological role, catalyzes the conversion of 1-hydroxy-2-methyl-2-(E)-butenyl 4-diphosphate (HMBPP) into a mixture of isopentenyl diphosphate (IPP) and dimethylallyl diphosphate (DMAPP). Acts in the terminal step of the DOXP/MEP pathway for isoprenoid precursor biosynthesis. The protein is 4-hydroxy-3-methylbut-2-enyl diphosphate reductase of Campylobacter fetus subsp. fetus (strain 82-40).